The primary structure comprises 168 residues: 2-C-methyl-D-erythritol 2,4-cyclodiphosphate synthase (168 aa).

Positions 8 and 10 each coordinate a divalent metal cation. 4-CDP-2-C-methyl-D-erythritol 2-phosphate-binding positions include 8–10 (DLH) and 34–35 (HS). His-42 is an a divalent metal cation binding site. Residues 56–58 (DIG), 61–65 (FPDTD), 132–135 (TTTE), and Arg-142 contribute to the 4-CDP-2-C-methyl-D-erythritol 2-phosphate site.

This sequence belongs to the IspF family. In terms of assembly, homotrimer. The cofactor is a divalent metal cation.

The enzyme catalyses 4-CDP-2-C-methyl-D-erythritol 2-phosphate = 2-C-methyl-D-erythritol 2,4-cyclic diphosphate + CMP. The protein operates within isoprenoid biosynthesis; isopentenyl diphosphate biosynthesis via DXP pathway; isopentenyl diphosphate from 1-deoxy-D-xylulose 5-phosphate: step 4/6. Involved in the biosynthesis of isopentenyl diphosphate (IPP) and dimethylallyl diphosphate (DMAPP), two major building blocks of isoprenoid compounds. Catalyzes the conversion of 4-diphosphocytidyl-2-C-methyl-D-erythritol 2-phosphate (CDP-ME2P) to 2-C-methyl-D-erythritol 2,4-cyclodiphosphate (ME-CPP) with a corresponding release of cytidine 5-monophosphate (CMP). This is 2-C-methyl-D-erythritol 2,4-cyclodiphosphate synthase from Desulfosudis oleivorans (strain DSM 6200 / JCM 39069 / Hxd3) (Desulfococcus oleovorans).